The primary structure comprises 217 residues: Dual specificity phosphatase 29 (217 aa).

Residues His46–Leu194 enclose the Tyrosine-protein phosphatase domain. Residue His138–Arg145 coordinates substrate. Residue Cys139 is the Phosphocysteine intermediate of the active site.

Belongs to the protein-tyrosine phosphatase family. Non-receptor class dual specificity subfamily.

The protein localises to the cytoplasm. The protein resides in the nucleus. It catalyses the reaction O-phospho-L-tyrosyl-[protein] + H2O = L-tyrosyl-[protein] + phosphate. The enzyme catalyses O-phospho-L-seryl-[protein] + H2O = L-seryl-[protein] + phosphate. The catalysed reaction is O-phospho-L-threonyl-[protein] + H2O = L-threonyl-[protein] + phosphate. Its function is as follows. Dual specificity phosphatase able to dephosphorylate phosphotyrosine, phosphoserine and phosphothreonine residues within the same substrate, with a preference for phosphotyrosine as a substrate. Involved in the modulation of AMPK and MAPK1/2 signaling pathways. The chain is Dual specificity phosphatase 29 (DUSP29) from Anolis carolinensis (Green anole).